Consider the following 201-residue polypeptide: Recombination protein RecR (201 aa).

The C4-type zinc-finger motif lies at 57 to 72 (CRYCRNLSDAEVCLLC). Residues 80-175 (QQICVVETPA…QATRLAYGVP (96 aa)) enclose the Toprim domain.

Belongs to the RecR family.

May play a role in DNA repair. It seems to be involved in an RecBC-independent recombinational process of DNA repair. It may act with RecF and RecO. In Dichelobacter nodosus (strain VCS1703A), this protein is Recombination protein RecR.